The following is a 502-amino-acid chain: MSNIGAITQIIGPIIDVSFENSGKLPAILNALEVTKADGQKIVLECQQHLGQYAVRTIAMHETEGLVRGMKVVDTGAAIQMPVGEAIRGRLFNVIGEAIDGLPQPKTQQKLPIHRPAPKFKDISTATEVLYTGIKVIDLLAPYVKGGKIGLFGGAGVGKTVLIMELIDNIAKSYAGLSVFAGVGERTREGNDLLREMIESGVINYGEEFRKSMEAGGWDLSKVDREALNKSHATLVFGQMNESPGARARVALTGLTAAEYFRDGNGQEKGKDVLLFIDNIFRFTQAGSEVSTLLGRMPSAVGYQPTLATEMGAMQERITSVKNGSITSVQAVYVPADDLTDPAPATTFAHLDATTVLSRKIASLGIYPAVDPLESSSRILNPEVLGEIHYNTAQRVKNILQRYKELQDIIAILGMDELSEEDVKIVYRARRVQRFFSQPFHVAEQFTGLKGMRVSIEDTIKGFNMIINGELDHLPEAAFNLVGTIEQAIEKGEKMLKEAIPS.

153-160 serves as a coordination point for ATP; it reads GGAGVGKT.

This sequence belongs to the ATPase alpha/beta chains family. As to quaternary structure, F-type ATPases have 2 components, CF(1) - the catalytic core - and CF(0) - the membrane proton channel. CF(1) has five subunits: alpha(3), beta(3), gamma(1), delta(1), epsilon(1). CF(0) has three main subunits: a(1), b(2) and c(9-12). The alpha and beta chains form an alternating ring which encloses part of the gamma chain. CF(1) is attached to CF(0) by a central stalk formed by the gamma and epsilon chains, while a peripheral stalk is formed by the delta and b chains.

It localises to the cell membrane. The catalysed reaction is ATP + H2O + 4 H(+)(in) = ADP + phosphate + 5 H(+)(out). Its function is as follows. Produces ATP from ADP in the presence of a proton gradient across the membrane. The catalytic sites are hosted primarily by the beta subunits. This chain is ATP synthase subunit beta, found in Amoebophilus asiaticus (strain 5a2).